Reading from the N-terminus, the 434-residue chain is UDP-N-acetylmuramate--L-alanine ligase (434 aa).

108-114 (GSHGKTT) is a binding site for ATP.

The protein belongs to the MurCDEF family.

Its subcellular location is the cytoplasm. The catalysed reaction is UDP-N-acetyl-alpha-D-muramate + L-alanine + ATP = UDP-N-acetyl-alpha-D-muramoyl-L-alanine + ADP + phosphate + H(+). Its pathway is cell wall biogenesis; peptidoglycan biosynthesis. Cell wall formation. The chain is UDP-N-acetylmuramate--L-alanine ligase from Geobacillus kaustophilus (strain HTA426).